Here is a 151-residue protein sequence, read N- to C-terminus: MKKIDVKILDQRIGTEFPLPTYATEGSAGLDLRALIDAPMTVEAGQTVLIPTGLSLYIADPTLAAVILPRSGLGHKHGIVLGNLVGLIDSDYQGPLMVSLWNRSTEPFKVEVGDRIAQLVFVPVVQAEFNVVSDFAQTERGEGGFGHSGKQ.

Residues Arg-70 to Gly-72, Asn-83, Leu-87 to Asp-89, and Met-97 contribute to the substrate site.

Belongs to the dUTPase family. The cofactor is Mg(2+).

The enzyme catalyses dUTP + H2O = dUMP + diphosphate + H(+). It functions in the pathway pyrimidine metabolism; dUMP biosynthesis; dUMP from dCTP (dUTP route): step 2/2. Its function is as follows. This enzyme is involved in nucleotide metabolism: it produces dUMP, the immediate precursor of thymidine nucleotides and it decreases the intracellular concentration of dUTP so that uracil cannot be incorporated into DNA. This Pasteurella multocida (strain Pm70) protein is Deoxyuridine 5'-triphosphate nucleotidohydrolase.